Consider the following 214-residue polypeptide: Pyridoxine/pyridoxamine 5'-phosphate oxidase (214 aa).

Substrate contacts are provided by residues 9 to 12 (RRSY) and Lys-68. Residues 63 to 68 (RVVLLK), 78 to 79 (YT), Lys-85, and Gln-107 contribute to the FMN site. Positions 125, 129, and 133 each coordinate substrate. Residues 142-143 (QS) and Trp-187 each bind FMN. 193 to 195 (RLH) lines the substrate pocket. Arg-197 serves as a coordination point for FMN.

The protein belongs to the pyridoxamine 5'-phosphate oxidase family. As to quaternary structure, homodimer. It depends on FMN as a cofactor.

The catalysed reaction is pyridoxamine 5'-phosphate + O2 + H2O = pyridoxal 5'-phosphate + H2O2 + NH4(+). It catalyses the reaction pyridoxine 5'-phosphate + O2 = pyridoxal 5'-phosphate + H2O2. The protein operates within cofactor metabolism; pyridoxal 5'-phosphate salvage; pyridoxal 5'-phosphate from pyridoxamine 5'-phosphate: step 1/1. It functions in the pathway cofactor metabolism; pyridoxal 5'-phosphate salvage; pyridoxal 5'-phosphate from pyridoxine 5'-phosphate: step 1/1. In terms of biological role, catalyzes the oxidation of either pyridoxine 5'-phosphate (PNP) or pyridoxamine 5'-phosphate (PMP) into pyridoxal 5'-phosphate (PLP). This chain is Pyridoxine/pyridoxamine 5'-phosphate oxidase, found in Christiangramia forsetii (strain DSM 17595 / CGMCC 1.15422 / KT0803) (Gramella forsetii).